A 249-amino-acid chain; its full sequence is Ribitol 2-dehydrogenase (249 aa).

Residue 20 to 43 (TGAASGIGLECARTLLGAGAKVVL) participates in NAD(+) binding. Y160 acts as the Proton acceptor in catalysis.

The protein belongs to the short-chain dehydrogenases/reductases (SDR) family. Homotetramer.

The catalysed reaction is ribitol + NAD(+) = D-ribulose + NADH + H(+). This is Ribitol 2-dehydrogenase (rbtD) from Klebsiella aerogenes (Enterobacter aerogenes).